The following is a 394-amino-acid chain: NADH dehydrogenase [ubiquinone] iron-sulfur protein 2 (394 aa).

Positions 1 to 16 are enriched in polar residues; it reads MTTKNRQIKNFTSNFG. The segment at 1-22 is disordered; that stretch reads MTTKNRQIKNFTSNFGPQHPAA.

The protein belongs to the complex I 49 kDa subunit family. As to quaternary structure, complex I is composed of about 45 different subunits. This is a component of the iron-sulfur (IP) fragment of the enzyme.

The protein resides in the mitochondrion. The catalysed reaction is a ubiquinone + NADH + 5 H(+)(in) = a ubiquinol + NAD(+) + 4 H(+)(out). Its function is as follows. Core subunit of the mitochondrial membrane respiratory chain NADH dehydrogenase (Complex I) that is believed to belong to the minimal assembly required for catalysis. Complex I functions in the transfer of electrons from NADH to the respiratory chain. The immediate electron acceptor for the enzyme is believed to be ubiquinone. Component of the iron-sulfur (IP) fragment of the enzyme. The polypeptide is NADH dehydrogenase [ubiquinone] iron-sulfur protein 2 (NAD7) (Nicotiana sylvestris (Wood tobacco)).